The primary structure comprises 89 residues: Small ribosomal subunit protein uS15 (89 aa).

It belongs to the universal ribosomal protein uS15 family. In terms of assembly, part of the 30S ribosomal subunit. Forms a bridge to the 50S subunit in the 70S ribosome, contacting the 23S rRNA.

One of the primary rRNA binding proteins, it binds directly to 16S rRNA where it helps nucleate assembly of the platform of the 30S subunit by binding and bridging several RNA helices of the 16S rRNA. Functionally, forms an intersubunit bridge (bridge B4) with the 23S rRNA of the 50S subunit in the ribosome. This is Small ribosomal subunit protein uS15 from Geobacillus kaustophilus (strain HTA426).